Reading from the N-terminus, the 176-residue chain is Ribosome maturation factor RimM (176 aa).

In terms of domain architecture, PRC barrel spans 93 to 172; the sequence is KDEFFYFDII…KIQVKNSLDI (80 aa).

It belongs to the RimM family. Binds ribosomal protein uS19.

The protein resides in the cytoplasm. An accessory protein needed during the final step in the assembly of 30S ribosomal subunit, possibly for assembly of the head region. Essential for efficient processing of 16S rRNA. May be needed both before and after RbfA during the maturation of 16S rRNA. It has affinity for free ribosomal 30S subunits but not for 70S ribosomes. This is Ribosome maturation factor RimM from Campylobacter fetus subsp. fetus (strain 82-40).